A 618-amino-acid polypeptide reads, in one-letter code: Proline--tRNA ligase (618 aa).

It belongs to the class-II aminoacyl-tRNA synthetase family. ProS type 1 subfamily. As to quaternary structure, homodimer.

The protein resides in the cytoplasm. The catalysed reaction is tRNA(Pro) + L-proline + ATP = L-prolyl-tRNA(Pro) + AMP + diphosphate. Its function is as follows. Catalyzes the attachment of proline to tRNA(Pro) in a two-step reaction: proline is first activated by ATP to form Pro-AMP and then transferred to the acceptor end of tRNA(Pro). As ProRS can inadvertently accommodate and process non-cognate amino acids such as alanine and cysteine, to avoid such errors it has two additional distinct editing activities against alanine. One activity is designated as 'pretransfer' editing and involves the tRNA(Pro)-independent hydrolysis of activated Ala-AMP. The other activity is designated 'posttransfer' editing and involves deacylation of mischarged Ala-tRNA(Pro). The misacylated Cys-tRNA(Pro) is not edited by ProRS. This is Proline--tRNA ligase from Streptococcus pyogenes serotype M28 (strain MGAS6180).